Reading from the N-terminus, the 547-residue chain is Nuclear speckle splicing regulatory protein 1 (547 aa).

The tract at residues 25–51 (KPSVFGNDSDDDEASVSESLQREAAKK) is disordered. Residues Ser27 and Ser33 each carry the phosphoserine modification. The stretch at 103–177 (IHNLLKAVEI…EARLDVTKQK (75 aa)) forms a coiled coil. Residues 105–169 (NLLKAVEIRK…REKRAAALEA (65 aa)) are necessary for alternative splicing activity. The tract at residues 188 to 523 (NQAVGEEAVP…KRSNEETVMS (336 aa)) is disordered. Residues Lys198 and Lys209 each participate in a glycyl lysine isopeptide (Lys-Gly) (interchain with G-Cter in SUMO2) cross-link. Basic and acidic residues predominate over residues 200–217 (SFREARTVIKEEKLRGYP). Residues 223–232 (ENRPQQNCAL) show a composition bias toward polar residues. Acidic residues predominate over residues 237–254 (EEAEENPDADSDSEESCD). 2 positions are modified to phosphoserine: Ser247 and Ser252. Over residues 255–269 (DGERGDHKVKSRGEE) the composition is skewed to basic and acidic residues. At Lys276 the chain carries N6-acetyllysine. Basic residues predominate over residues 277–287 (YLKHHKNHTHS). Lys279 participates in a covalent cross-link: Glycyl lysine isopeptide (Lys-Gly) (interchain with G-Cter in SUMO2). The span at 308-339 (RGHEHKGGQHQDRQSRDQESCHKDRSHREEKS) shows a compositional bias: basic and acidic residues. Residues 340 to 355 (SHRHREASHKDHHWKR) are compositionally biased toward basic residues. Composition is skewed to basic and acidic residues over residues 356-480 (HEHE…KPPR) and 490-506 (RLTE…ERPP). A coiled-coil region spans residues 376–417 (KREKYSSREQEKDRQWNDHDRYSEKEKKGKEKEEHRKARRER). Ser447 bears the Phosphoserine mark.

It belongs to the NSRP1 family. As to quaternary structure, interacts (via C-terminus) with SRSF1. Interacts (via C-terminus) with SRSF2.

The protein resides in the nucleus. It localises to the nucleus speckle. Its function is as follows. RNA-binding protein that mediates pre-mRNA alternative splicing regulation. In Rattus norvegicus (Rat), this protein is Nuclear speckle splicing regulatory protein 1 (Nsrp1).